A 198-amino-acid polypeptide reads, in one-letter code: Probable GTP-binding protein EngB (198 aa).

One can recognise an EngB-type G domain in the interval 22–195; that stretch reads NRNEVAFVGR…IDKLFLEFAT (174 aa). GTP-binding positions include 30-37, 57-61, 75-78, 142-145, and 174-176; these read GRSNVGKS, GKTRL, DLPG, TKSD, and YSS. Residues S37 and T59 each coordinate Mg(2+).

Belongs to the TRAFAC class TrmE-Era-EngA-EngB-Septin-like GTPase superfamily. EngB GTPase family. Mg(2+) serves as cofactor.

In terms of biological role, necessary for normal cell division and for the maintenance of normal septation. The protein is Probable GTP-binding protein EngB of Clostridium botulinum (strain Alaska E43 / Type E3).